Reading from the N-terminus, the 264-residue chain is Putative hydro-lyase Psyr_0498 (264 aa).

This sequence belongs to the D-glutamate cyclase family.

The sequence is that of Putative hydro-lyase Psyr_0498 from Pseudomonas syringae pv. syringae (strain B728a).